The sequence spans 369 residues: MNIDFPFQQPSLYGYKLNELKSILSPAFRAKQIYHWLYHRYENDAMRMDNISKTMQNYIREHFALSQIYPIRVEHSIDGSKKYLFETYDGHCFESVLIQMRDKKLGHKGEVVESEKWTMCLSSQIGCKVGCAFCFTAKGGFVRNLHASEIVEQVVIMKKDNQMAPHKRVNIVYMGMGEPLDNIENVTRAIEILSESEGLSISARRQTISTSGIAPKIKQLGKLNLGVQLAISLHAVDDKLRSQLIPMNKAYNISDILTEVRAFPIDTRKKVMFEYLMIKGVNDDLKSAKKLLQLLNGIKAKVNLILFNPHEGSTFKRPEINDVRAFADFLIKRGLLCTIRESRGIDISAACGQLREKVKAENVSCETLT.

Glutamate 94 acts as the Proton acceptor in catalysis. The region spanning 113-346 (ESEKWTMCLS…CTIRESRGID (234 aa)) is the Radical SAM core domain. An intrachain disulfide couples cysteine 120 to cysteine 351. Residues cysteine 127, cysteine 131, and cysteine 134 each coordinate [4Fe-4S] cluster. S-adenosyl-L-methionine contacts are provided by residues 177 to 178 (GE), serine 209, 232 to 234 (SLH), and asparagine 308. The S-methylcysteine intermediate role is filled by cysteine 351.

It belongs to the radical SAM superfamily. RlmN family. The cofactor is [4Fe-4S] cluster.

It is found in the cytoplasm. It carries out the reaction adenosine(2503) in 23S rRNA + 2 reduced [2Fe-2S]-[ferredoxin] + 2 S-adenosyl-L-methionine = 2-methyladenosine(2503) in 23S rRNA + 5'-deoxyadenosine + L-methionine + 2 oxidized [2Fe-2S]-[ferredoxin] + S-adenosyl-L-homocysteine. The enzyme catalyses adenosine(37) in tRNA + 2 reduced [2Fe-2S]-[ferredoxin] + 2 S-adenosyl-L-methionine = 2-methyladenosine(37) in tRNA + 5'-deoxyadenosine + L-methionine + 2 oxidized [2Fe-2S]-[ferredoxin] + S-adenosyl-L-homocysteine. Functionally, specifically methylates position 2 of adenine 2503 in 23S rRNA and position 2 of adenine 37 in tRNAs. m2A2503 modification seems to play a crucial role in the proofreading step occurring at the peptidyl transferase center and thus would serve to optimize ribosomal fidelity. This is Dual-specificity RNA methyltransferase RlmN from Helicobacter hepaticus (strain ATCC 51449 / 3B1).